The primary structure comprises 606 residues: Threonine--tRNA ligase (606 aa).

The catalytic stretch occupies residues 212–503 (DHRKLGVEMK…LLEHTAGELP (292 aa)). Zn(2+) is bound by residues cysteine 304, histidine 355, and histidine 480.

This sequence belongs to the class-II aminoacyl-tRNA synthetase family. In terms of assembly, homodimer. Zn(2+) is required as a cofactor.

The protein localises to the cytoplasm. The catalysed reaction is tRNA(Thr) + L-threonine + ATP = L-threonyl-tRNA(Thr) + AMP + diphosphate + H(+). Catalyzes the attachment of threonine to tRNA(Thr) in a two-step reaction: L-threonine is first activated by ATP to form Thr-AMP and then transferred to the acceptor end of tRNA(Thr). Also edits incorrectly charged L-seryl-tRNA(Thr). In Campylobacter concisus (strain 13826), this protein is Threonine--tRNA ligase.